A 636-amino-acid chain; its full sequence is 1-deoxy-D-xylulose-5-phosphate synthase (636 aa).

Residues His75 and Ala116 to Ser118 each bind thiamine diphosphate. Asp147 provides a ligand contact to Mg(2+). Thiamine diphosphate contacts are provided by residues Gly148 to Ala149, Asn177, Tyr288, and Glu370. Asn177 contacts Mg(2+).

This sequence belongs to the transketolase family. DXPS subfamily. Homodimer. Requires Mg(2+) as cofactor. Thiamine diphosphate is required as a cofactor.

It catalyses the reaction D-glyceraldehyde 3-phosphate + pyruvate + H(+) = 1-deoxy-D-xylulose 5-phosphate + CO2. It functions in the pathway metabolic intermediate biosynthesis; 1-deoxy-D-xylulose 5-phosphate biosynthesis; 1-deoxy-D-xylulose 5-phosphate from D-glyceraldehyde 3-phosphate and pyruvate: step 1/1. Catalyzes the acyloin condensation reaction between C atoms 2 and 3 of pyruvate and glyceraldehyde 3-phosphate to yield 1-deoxy-D-xylulose-5-phosphate (DXP). The polypeptide is 1-deoxy-D-xylulose-5-phosphate synthase (Ralstonia pickettii (strain 12J)).